A 366-amino-acid polypeptide reads, in one-letter code: MSGRLSELAAEFGMVERALGDPAALADPQAYTRLTRRHRELLPLVTLLREREALESDLRGAQELLSDPDMRELAQNEITEATARLEQLGAELEVLLLPTDPDDLKNVILELRAGAGGAEAGLFVMDLLRMYTRYAEDRGLRLNVLEASESDLGGASKVVAEISGEFAFRAFKWERGVHRVQRVPATESQGRIHTSTVTVAVLPEAEQGEVQLDLSEVRIDVFRSQGAGGQGVNTTDSAVRAVYRAGTPDEIMVVCQDGRSQIKNREKALVVLASRLAERERAARDAQEARDRAAQVGSGERSEKIRTYNYPQNRVTDHRLEGDSKNHPLDSVMAGGLGPVVSALARDERERQLLAASAEEARDGAA.

N5-methylglutamine is present on glutamine 230. Composition is skewed to basic and acidic residues over residues 283–293 (ARDAQEARDRA) and 315–328 (VTDHRLEGDSKNHP). Residues 283–335 (ARDAQEARDRAAQVGSGERSEKIRTYNYPQNRVTDHRLEGDSKNHPLDSVMAG) form a disordered region.

The protein belongs to the prokaryotic/mitochondrial release factor family. Post-translationally, methylated by PrmC. Methylation increases the termination efficiency of RF1.

The protein resides in the cytoplasm. Peptide chain release factor 1 directs the termination of translation in response to the peptide chain termination codons UAG and UAA. In Deinococcus deserti (strain DSM 17065 / CIP 109153 / LMG 22923 / VCD115), this protein is Peptide chain release factor 1.